The sequence spans 637 residues: Pyrethroid hydrolase (637 aa).

The enzyme catalyses (-)-trans-permethrin + H2O = (3-phenoxyphenyl)methanol + (1S,3R)-3-(2,2-dichlorovinyl)-2,2-dimethylcyclopropanecarboxylate + H(+). With respect to regulation, inhibited by Hg(2+), Ag(+) and rho-chloromercuribenzoate. In terms of biological role, catalyzes the hydrolysis of pyrethroids pesticides. Hydrolyzes cis-permethrin at approximately equal rate to trans-permethrin. This is Pyrethroid hydrolase (estP) from Klebsiella sp.